The chain runs to 316 residues: UDP-N-acetylglucosamine transporter yea4 (316 aa).

Residues 1–3 (MIA) are Cytoplasmic-facing. A helical membrane pass occupies residues 4 to 24 (SALSFIFGGCCSNAYALEALV). Topologically, residues 25–31 (REFPSSG) are lumenal. A helical transmembrane segment spans residues 32-52 (ILITFSQFILITIEGLIYFLL). The Cytoplasmic segment spans residues 53–67 (NDVQSLKHPKVPRKR). Residues 68–88 (WFVVVVMFFAINVLNNVALGF) traverse the membrane as a helical segment. The Lumenal portion of the chain corresponds to 89–120 (DISVPVHIILRSSGPLTTMAVGRILAGKRYSS). The chain crosses the membrane as a helical span at residues 121-141 (LQIGSVFILTIGVIIATLGNA). Residues 142-153 (KDLHLHVESMTR) are Cytoplasmic-facing. A helical transmembrane segment spans residues 154 to 174 (FGIGFTILVITQILGAIMGLV). Residues 175 to 187 (LENTYRIYGSDWR) lie on the Lumenal side of the membrane. Residues 188–208 (ESLFYTHALSLPFFLFLLRPI) form a helical membrane-spanning segment. The Cytoplasmic portion of the chain corresponds to 209 to 214 (RSQWND). Residues 215-235 (LFAIHTKGFLNLPSGVWYLCF) traverse the membrane as a helical segment. Residues 236–274 (NTLAQYFCVRGVNALGAETSALTVSVVLNVRKFVSLCLS) are Lumenal-facing. Residues 275–295 (LILFENEMGPAVKFGALLVFG) form a helical membrane-spanning segment. Over 296–316 (SSAVYASARSKPKTNGLKKND) the chain is Cytoplasmic.

The protein belongs to the nucleotide-sugar transporter family. SLC35B subfamily.

It is found in the endoplasmic reticulum. It localises to the endoplasmic reticulum membrane. Functionally, sugar transporter that specifically mediates the transport of UDP-N-acetylglucosamine (UDP-GlcNAc) and is required for cell wall chitin synthesis. The protein is UDP-N-acetylglucosamine transporter yea4 (yea4) of Schizosaccharomyces pombe (strain 972 / ATCC 24843) (Fission yeast).